A 379-amino-acid chain; its full sequence is Anhydro-N-acetylmuramic acid kinase (379 aa).

9–16 (GTSADGVD) contributes to the ATP binding site.

This sequence belongs to the anhydro-N-acetylmuramic acid kinase family.

The enzyme catalyses 1,6-anhydro-N-acetyl-beta-muramate + ATP + H2O = N-acetyl-D-muramate 6-phosphate + ADP + H(+). It participates in amino-sugar metabolism; 1,6-anhydro-N-acetylmuramate degradation. Its pathway is cell wall biogenesis; peptidoglycan recycling. Catalyzes the specific phosphorylation of 1,6-anhydro-N-acetylmuramic acid (anhMurNAc) with the simultaneous cleavage of the 1,6-anhydro ring, generating MurNAc-6-P. Is required for the utilization of anhMurNAc either imported from the medium or derived from its own cell wall murein, and thus plays a role in cell wall recycling. In Prochlorococcus marinus (strain MIT 9211), this protein is Anhydro-N-acetylmuramic acid kinase.